The sequence spans 632 residues: 2-hydroxyacyl-CoA lyase 2 (632 aa).

Residues 13-33 (FFPSFLLLAFGTLVAAVLGVA) traverse the membrane as a helical segment. Residue Glu-98 participates in thiamine diphosphate binding. A Phosphoserine modification is found at Ser-369. The interval 470-550 (DFVATAAYLV…VIALVGNDAG (81 aa)) is thiamine pyrophosphate binding. Mg(2+)-binding residues include Asp-521 and Asn-547.

This sequence belongs to the TPP enzyme family. Mg(2+) serves as cofactor. The cofactor is thiamine diphosphate.

The protein resides in the endoplasmic reticulum membrane. The catalysed reaction is 2-hydroxyoctadecanoyl-CoA = heptadecanal + formyl-CoA. It carries out the reaction (2R)-hydroxyhexadecanoyl-CoA = pentadecanal + formyl-CoA. Endoplasmic reticulum 2-OH acyl-CoA lyase involved in the cleavage (C1 removal) reaction in the fatty acid alpha-oxydation in a thiamine pyrophosphate (TPP)-dependent manner. Involved in the phytosphingosine degradation pathway. The sequence is that of 2-hydroxyacyl-CoA lyase 2 (Ilvbl) from Mus musculus (Mouse).